The sequence spans 432 residues: Trigger factor (432 aa).

Residues 163–248 form the PPIase FKBP-type domain; the sequence is GDIAVIDFEG…LKALNKKELP (86 aa).

Belongs to the FKBP-type PPIase family. Tig subfamily.

It is found in the cytoplasm. It carries out the reaction [protein]-peptidylproline (omega=180) = [protein]-peptidylproline (omega=0). Functionally, involved in protein export. Acts as a chaperone by maintaining the newly synthesized protein in an open conformation. Functions as a peptidyl-prolyl cis-trans isomerase. The protein is Trigger factor of Caldanaerobacter subterraneus subsp. tengcongensis (strain DSM 15242 / JCM 11007 / NBRC 100824 / MB4) (Thermoanaerobacter tengcongensis).